We begin with the raw amino-acid sequence, 319 residues long: Serine/threonine-protein phosphatase PP1 isozyme 2 (319 aa).

Positions 61, 63, 89, and 121 each coordinate Mn(2+). H122 serves as the catalytic Proton donor. Positions 170 and 245 each coordinate Mn(2+).

It belongs to the PPP phosphatase family. PP-1 subfamily. The cofactor is Mn(2+).

It carries out the reaction O-phospho-L-seryl-[protein] + H2O = L-seryl-[protein] + phosphate. It catalyses the reaction O-phospho-L-threonyl-[protein] + H2O = L-threonyl-[protein] + phosphate. This chain is Serine/threonine-protein phosphatase PP1 isozyme 2, found in Acetabularia peniculus (Green alga).